The chain runs to 567 residues: Dynein, 70 kDa intermediate chain, flagellar outer arm (567 aa).

WD repeat units follow at residues 214-254 (VPTS…GPVE), 261-302 (SHRD…ECVE), 360-399 (GHHGPIYGLRRNPFNSKYFLSIGDWTARVWVEDTAVKTPI), and 404-444 (YHPT…NEPT).

It belongs to the dynein intermediate chain family. In terms of assembly, consists of at least 3 heavy chains (alpha, beta and gamma), 2 intermediate chains and 8 light chains.

It localises to the cytoplasm. The protein resides in the cytoskeleton. It is found in the flagellum axoneme. In terms of biological role, may play a role in regulating dynein heavy chain (DHC) activity. May function in holding IC78 to the DHC, or in stabilizing the entire dynein complex. This Chlamydomonas reinhardtii (Chlamydomonas smithii) protein is Dynein, 70 kDa intermediate chain, flagellar outer arm (ODA6).